We begin with the raw amino-acid sequence, 88 residues long: Putative membrane protein insertion efficiency factor (88 aa).

Belongs to the UPF0161 family.

The protein localises to the cell inner membrane. In terms of biological role, could be involved in insertion of integral membrane proteins into the membrane. The protein is Putative membrane protein insertion efficiency factor of Coxiella burnetii (strain Dugway 5J108-111).